The primary structure comprises 100 residues: Small ribosomal subunit protein uS14c (100 aa).

This sequence belongs to the universal ribosomal protein uS14 family. Part of the 30S ribosomal subunit.

It is found in the plastid. Its subcellular location is the chloroplast. Its function is as follows. Binds 16S rRNA, required for the assembly of 30S particles. This is Small ribosomal subunit protein uS14c from Coffea arabica (Arabian coffee).